Here is a 430-residue protein sequence, read N- to C-terminus: Small ribosomal subunit protein uS9m (430 aa).

The N-terminal 34 residues, 1–34 (MLSRLFLRHSNLRFVTLVSSKSNSQIFSSFIRPL), are a transit peptide targeting the mitochondrion. Residues 32–97 (RPLSTNSSGG…GGEGKWPEEP (66 aa)) form a disordered region. A compositionally biased stretch (gly residues) spans 39–48 (SGGGGNGDGN). Over residues 68-79 (GPFSSDDSFGSS) the composition is skewed to low complexity. A compositionally biased stretch (gly residues) spans 80–91 (GVAGSGLPGGEG).

It belongs to the universal ribosomal protein uS9 family. In terms of assembly, interacts (via C terminus) with PIA2. Component of the mitochondrial ribosome small subunit. Expressed in root tips, young leaves, flowers and siliques.

The protein resides in the mitochondrion. Functionally, mitochondrial ribosomal protein required for central cell maturation. May work together with PIA2 in controlling female gametophyte development, possibly by regulating the expression of some mitochondrial proteins. This Arabidopsis thaliana (Mouse-ear cress) protein is Small ribosomal subunit protein uS9m.